An 825-amino-acid polypeptide reads, in one-letter code: NT-3 growth factor receptor (825 aa).

Positions 1-31 are cleaved as a signal peptide; that stretch reads MDVSLCPAKCSFWRIFLLGSVWLDYVGSVLA. Disulfide bonds link C32/C38 and C36/C45. The Extracellular segment spans residues 32-429; that stretch reads CPANCVCSKT…TVTHKPEEDT (398 aa). N68, N72, and N79 each carry an N-linked (GlcNAc...) asparagine glycan. LRR repeat units lie at residues 104-125 and 128-149; these read GLQK…AFAK and HLRY…LFQT. 2 N-linked (GlcNAc...) asparagine glycosylation sites follow: N133 and N163. One can recognise an LRRCT domain in the interval 160–209; it reads NFFNCSCDIRWMQLWQEQGEAKLNSQSLYCISADGSQLPLFRMNISQCDL. 2 cysteine pairs are disulfide-bonded: C164–C189 and C166–C207. 7 N-linked (GlcNAc...) asparagine glycosylation sites follow: N203, N218, N232, N259, N267, N272, and N294. Ig-like C2-type domains follow at residues 210 to 300 and 309 to 382; these read PEIS…VALT and SLEE…NRQE. C231 and C284 are joined by a disulfide. C320 and C362 form a disulfide bridge. N-linked (GlcNAc...) asparagine glycans are attached at residues N375 and N388. The chain crosses the membrane as a helical span at residues 430 to 453; it reads FGVSIAVGLAAFACVLLVVLFIMI. The Cytoplasmic segment spans residues 454-825; that stretch reads NKYGRRSKFG…ATPIYLDILG (372 aa). Residue Y516 is modified to Phosphotyrosine; by autocatalysis. Residues 538–814 form the Protein kinase domain; that stretch reads IVLKRELGEG…EIYKILHALG (277 aa). ATP contacts are provided by residues 544-552 and K572; that span reads LGEGAFGKV. D679 (proton acceptor) is an active-site residue. A phosphotyrosine; by autocatalysis mark is found at Y705, Y709, Y710, and Y820.

Belongs to the protein kinase superfamily. Tyr protein kinase family. Insulin receptor subfamily. In terms of assembly, exists in a dynamic equilibrium between monomeric (low affinity) and dimeric (high affinity) structures. Binds SH2B2. Interacts with SQSTM1 and KIDINS220. Interacts with PTPRS. Interacts with MAPK8IP3/JIP3. In terms of processing, ligand-mediated auto-phosphorylation. As to expression, preferentially in the brain, low levels in the ovaries.

The protein localises to the membrane. The enzyme catalyses L-tyrosyl-[protein] + ATP = O-phospho-L-tyrosyl-[protein] + ADP + H(+). Its function is as follows. Receptor tyrosine kinase involved in nervous system and probably heart development. Upon binding of its ligand NTF3/neurotrophin-3, NTRK3 autophosphorylates and activates different signaling pathways, including the phosphatidylinositol 3-kinase/AKT and the MAPK pathways, that control cell survival and differentiation. The chain is NT-3 growth factor receptor (NTRK3) from Sus scrofa (Pig).